The following is a 213-amino-acid chain: RNA pyrophosphohydrolase (213 aa).

The Nudix hydrolase domain maps to 6 to 149 (GFRPNVGIVL…KRGVYEIALT (144 aa)). A Nudix box motif is present at residues 38–59 (GGIDRGETPEQAMIRELHEEVG). Positions 185-213 (NFELPPGGSFEPNPQTSYGLDASGKPHET) are disordered.

It belongs to the Nudix hydrolase family. RppH subfamily. A divalent metal cation serves as cofactor.

Its function is as follows. Accelerates the degradation of transcripts by removing pyrophosphate from the 5'-end of triphosphorylated RNA, leading to a more labile monophosphorylated state that can stimulate subsequent ribonuclease cleavage. This is RNA pyrophosphohydrolase from Albidiferax ferrireducens (strain ATCC BAA-621 / DSM 15236 / T118) (Rhodoferax ferrireducens).